A 214-amino-acid polypeptide reads, in one-letter code: Large ribosomal subunit protein uL4c (214 aa).

Residues 43–80 (KQSNEKRQGSANTKTRSEVRGGGRKPWRQKGTGRARAG) form a disordered region. Basic residues predominate over residues 64-75 (GGRKPWRQKGTG).

The protein belongs to the universal ribosomal protein uL4 family. In terms of assembly, part of the 50S ribosomal subunit.

Its subcellular location is the plastid. It is found in the chloroplast. Functionally, probably binds the 23S rRNA. The protein is Large ribosomal subunit protein uL4c (rpl4) of Porphyra purpurea (Red seaweed).